A 126-amino-acid polypeptide reads, in one-letter code: MSWQTYVDTNLVGTGAVTQAAILGLDGNTWATSAGFAVTPAQGQTLASAFNNADPIRASGFDLAGVHYVTLRADDRSIYGKKGSAGVITVKTSKSILVGVYNEKIQPGTAANVVEKLADYLIGQGF.

The interval 2–36 (SWQTYVDTNLVGTGAVTQAAILGLDGNTWATSAGF) is actin binding. Lys-104 carries the post-translational modification N6,N6,N6-trimethyllysine.

Belongs to the profilin family. In terms of assembly, occurs in many kinds of cells as a complex with monomeric actin in a 1:1 ratio.

Its subcellular location is the cytoplasm. The protein resides in the cytoskeleton. Binds to actin and affects the structure of the cytoskeleton. At high concentrations, profilin prevents the polymerization of actin, whereas it enhances it at low concentrations. By binding to PIP2, it inhibits the formation of IP3 and DG. The protein is Profilin-1A of Acanthamoeba castellanii (Amoeba).